The sequence spans 207 residues: Thiamine-phosphate synthase (207 aa).

4-amino-2-methyl-5-(diphosphooxymethyl)pyrimidine-binding positions include 38 to 42 (QYRAK) and asparagine 70. Residues aspartate 71 and aspartate 90 each contribute to the Mg(2+) site. A 4-amino-2-methyl-5-(diphosphooxymethyl)pyrimidine-binding site is contributed by threonine 109. 135-137 (TNS) contributes to the 2-[(2R,5Z)-2-carboxy-4-methylthiazol-5(2H)-ylidene]ethyl phosphate binding site. Lysine 138 is a binding site for 4-amino-2-methyl-5-(diphosphooxymethyl)pyrimidine. 2-[(2R,5Z)-2-carboxy-4-methylthiazol-5(2H)-ylidene]ethyl phosphate-binding positions include glycine 165 and 185-186 (IS).

It belongs to the thiamine-phosphate synthase family. Mg(2+) serves as cofactor.

It carries out the reaction 2-[(2R,5Z)-2-carboxy-4-methylthiazol-5(2H)-ylidene]ethyl phosphate + 4-amino-2-methyl-5-(diphosphooxymethyl)pyrimidine + 2 H(+) = thiamine phosphate + CO2 + diphosphate. It catalyses the reaction 2-(2-carboxy-4-methylthiazol-5-yl)ethyl phosphate + 4-amino-2-methyl-5-(diphosphooxymethyl)pyrimidine + 2 H(+) = thiamine phosphate + CO2 + diphosphate. The catalysed reaction is 4-methyl-5-(2-phosphooxyethyl)-thiazole + 4-amino-2-methyl-5-(diphosphooxymethyl)pyrimidine + H(+) = thiamine phosphate + diphosphate. Its pathway is cofactor biosynthesis; thiamine diphosphate biosynthesis; thiamine phosphate from 4-amino-2-methyl-5-diphosphomethylpyrimidine and 4-methyl-5-(2-phosphoethyl)-thiazole: step 1/1. Functionally, condenses 4-methyl-5-(beta-hydroxyethyl)thiazole monophosphate (THZ-P) and 2-methyl-4-amino-5-hydroxymethyl pyrimidine pyrophosphate (HMP-PP) to form thiamine monophosphate (TMP). In Clostridium perfringens (strain 13 / Type A), this protein is Thiamine-phosphate synthase.